A 237-amino-acid chain; its full sequence is Cysteine-rich venom protein DIS1 (237 aa).

An N-terminal signal peptide occupies residues 1–18 (MFVFILLSLAAVLQQSFG). The SCP domain occupies 37 to 165 (VDKHNAFRRS…SYNYFYVCQY (129 aa)). 7 disulfides stabilise this stretch: cysteine 74/cysteine 152, cysteine 91/cysteine 166, cysteine 147/cysteine 163, cysteine 185/cysteine 192, cysteine 188/cysteine 197, cysteine 201/cysteine 234, and cysteine 219/cysteine 232. The 34-residue stretch at 201-234 (CSREDVFMNCKSLVAQSNCQDDYIRKNCPATCFC) folds into the ShKT domain.

This sequence belongs to the CRISP family. As to expression, expressed by the venom gland.

It localises to the secreted. Its function is as follows. Weakly blocks contraction of smooth muscle elicited by high potassium-induced depolarization, but does not block caffeine-stimulated contraction. May target voltage-gated calcium channels on smooth muscle. This Dispholidus typus (Boomslang) protein is Cysteine-rich venom protein DIS1.